Reading from the N-terminus, the 329-residue chain is tRNA-modifying protein YgfZ (329 aa).

Folate contacts are provided by Trp32 and Trp190.

It belongs to the tRNA-modifying YgfZ family.

It is found in the cytoplasm. Its function is as follows. Folate-binding protein involved in regulating the level of ATP-DnaA and in the modification of some tRNAs. It is probably a key factor in regulatory networks that act via tRNA modification, such as initiation of chromosomal replication. In Photobacterium profundum (strain SS9), this protein is tRNA-modifying protein YgfZ.